The primary structure comprises 427 residues: MQQHELSSSRFVSTLTKNTVALILAGGKGSRLRDLTNWTAKPAVPFGGKFRIIDFPLSNCINSGVRRIGVVTQYKAHTLIQHIQRGWGFLRGEFNEFVELLPAQQRIQEEWYKGTADAVFQNLDILRQTNIEFVLILAGDHVYKMDYGQMLAAHVRNKADMTVACINVPLKEASAFGVMGVDENDRVVDFEEKPAHPSSLPDDPDHALASMGIYVFNAAFLYEQLIRDADDPKSSHDFGHDIIPYLIKKYRVFAHRFTDSCVGAADGNYYWRDVGTVDAYWEANMELTKVVPELNLYDRQWPIWTYQEQLPPAKFVFDNEERRGQATDSLISGGCIVSGANVRNSVLFSDVRVNSYSSIEQSVILPKVDIGRHVTLRRVVVDSGARIPDGMEIGVNLELDRKRFHITEQGVVLVTPDMLGQNLHHIR.

Alpha-D-glucose 1-phosphate-binding positions include tyrosine 112, glycine 177, 192–193 (EK), and serine 210.

Belongs to the bacterial/plant glucose-1-phosphate adenylyltransferase family. Homotetramer.

It carries out the reaction alpha-D-glucose 1-phosphate + ATP + H(+) = ADP-alpha-D-glucose + diphosphate. It functions in the pathway glycan biosynthesis; glycogen biosynthesis. Involved in the biosynthesis of ADP-glucose, a building block required for the elongation reactions to produce glycogen. Catalyzes the reaction between ATP and alpha-D-glucose 1-phosphate (G1P) to produce pyrophosphate and ADP-Glc. The chain is Glucose-1-phosphate adenylyltransferase from Methylobacillus flagellatus (strain ATCC 51484 / DSM 6875 / VKM B-1610 / KT).